Reading from the N-terminus, the 175-residue chain is Small ribosomal subunit protein mS38 (175 aa).

The protein belongs to the mitochondrion-specific ribosomal protein mS38 family. As to quaternary structure, component of the mitochondrial small ribosomal subunit (mt-SSU). Mature yeast 74S mitochondrial ribosomes consist of a small (37S) and a large (54S) subunit. The 37S small subunit contains a 15S ribosomal RNA (15S mt-rRNA) and at least 32 different proteins. The 54S large subunit contains a 21S rRNA (21S mt-rRNA) and at least 45 different proteins.

The protein resides in the mitochondrion. The protein localises to the mitochondrion inner membrane. Functionally, component of the mitochondrial ribosome (mitoribosome), a dedicated translation machinery responsible for the synthesis of mitochondrial genome-encoded proteins, including at least some of the essential transmembrane subunits of the mitochondrial respiratory chain. The mitoribosomes are attached to the mitochondrial inner membrane and translation products are cotranslationally integrated into the membrane. mS38 is also involved in the splicing of the COX1 mRNA. This Schizosaccharomyces pombe (strain 972 / ATCC 24843) (Fission yeast) protein is Small ribosomal subunit protein mS38 (cox24).